A 111-amino-acid chain; its full sequence is Translation initiation factor 1A (111 aa).

Residues 11–83 form the S1-like domain; sequence KKIRLPKEGE…ERADVTWRYT (73 aa).

It belongs to the eIF-1A family.

Seems to be required for maximal rate of protein biosynthesis. Enhances ribosome dissociation into subunits and stabilizes the binding of the initiator Met-tRNA(I) to 40 S ribosomal subunits. The chain is Translation initiation factor 1A (eIF1A) from Methanopyrus kandleri (strain AV19 / DSM 6324 / JCM 9639 / NBRC 100938).